The chain runs to 279 residues: Undecaprenyl-diphosphatase (279 aa).

8 consecutive transmembrane segments (helical) span residues 2–22 (LFIE…TEWL), 44–64 (AFME…VIVI), 85–105 (WQLW…AVPL), 113–133 (FNHM…FLWI), 163–183 (VLSI…AIIL), 188–208 (TVAA…YSGL), 225–245 (LLVL…VIKL), and 255–275 (FTVF…YSVF).

This sequence belongs to the UppP family.

It is found in the cell membrane. The enzyme catalyses di-trans,octa-cis-undecaprenyl diphosphate + H2O = di-trans,octa-cis-undecaprenyl phosphate + phosphate + H(+). Functionally, catalyzes the dephosphorylation of undecaprenyl diphosphate (UPP). Confers resistance to bacitracin. This is Undecaprenyl-diphosphatase from Streptococcus equi subsp. zooepidemicus (strain H70).